The sequence spans 54 residues: Toxin AnmTx Cj 1c-1 (54 aa).

Residues 1-7 form the signal peptide; that stretch reads MLNKRGV. Intrachain disulfides connect Cys9/Cys50, Cys11/Cys41, and Cys33/Cys51. Glutamic acid 1-amide is present on Glu53.

Belongs to the sea anemone sodium channel inhibitory toxin family. Type I subfamily. Contains 3 disulfide bonds.

It localises to the secreted. Its subcellular location is the nematocyst. In vivo, induces marked paralysis on shrimps (C.multidentata) at 10-20 seconds after injection and a weak toxicity when injected into insect larvae (M.domestica). This Epiactis japonica (Sea anemone) protein is Toxin AnmTx Cj 1c-1.